A 163-amino-acid polypeptide reads, in one-letter code: Norbelladine synthase (163 aa).

68–71 (YHKE) lines the tyramine pocket. Lys-83 serves as the catalytic Proton donor.

Belongs to the BetVI family. Mostly expressed in bulbs, and, to a lower extent, in roots, stems, leaves and flowers.

It carries out the reaction 3,4-dihydroxybenzaldehyde + tyramine + AH2 = norbelladine + A + H2O. The protein operates within alkaloid biosynthesis. Catalyzes the condensation of tyramine and 3,4-dihydroxybenzaldehyde (3,4-DHBA) to form norbelladine, the common precursor to all Amaryllidaceae alkaloids such as galanthamine, lycorine and haemanthamine, and including haemanthamine- and crinamine-type alkaloids, promising anticancer agents. This Narcissus pseudonarcissus (Daffodil) protein is Norbelladine synthase.